The chain runs to 329 residues: Phosphate acetyltransferase (329 aa).

This sequence belongs to the phosphate acetyltransferase and butyryltransferase family.

Its subcellular location is the cytoplasm. It catalyses the reaction acetyl-CoA + phosphate = acetyl phosphate + CoA. The protein operates within metabolic intermediate biosynthesis; acetyl-CoA biosynthesis; acetyl-CoA from acetate: step 2/2. This is Phosphate acetyltransferase (pta) from Staphylococcus epidermidis (strain ATCC 12228 / FDA PCI 1200).